The primary structure comprises 83 residues: Transmembrane protein EP84R (83 aa).

The next 2 helical transmembrane spans lie at 31–51 (VIGI…IIIL) and 59–79 (AGSV…FLIY).

Belongs to the asfivirus EP84R family.

The protein localises to the virion membrane. The polypeptide is Transmembrane protein EP84R (Ornithodoros (relapsing fever ticks)).